A 403-amino-acid polypeptide reads, in one-letter code: Phosphopentomutase 2 (403 aa).

Mn(2+)-binding residues include Asp13, Asp298, His303, Asp339, His340, and His351.

Belongs to the phosphopentomutase family. Mn(2+) serves as cofactor.

The protein resides in the cytoplasm. It carries out the reaction 2-deoxy-alpha-D-ribose 1-phosphate = 2-deoxy-D-ribose 5-phosphate. The enzyme catalyses alpha-D-ribose 1-phosphate = D-ribose 5-phosphate. It participates in carbohydrate degradation; 2-deoxy-D-ribose 1-phosphate degradation; D-glyceraldehyde 3-phosphate and acetaldehyde from 2-deoxy-alpha-D-ribose 1-phosphate: step 1/2. Its function is as follows. Isomerase that catalyzes the conversion of deoxy-ribose 1-phosphate (dRib-1-P) and ribose 1-phosphate (Rib-1-P) to deoxy-ribose 5-phosphate (dRib-5-P) and ribose 5-phosphate (Rib-5-P), respectively. The polypeptide is Phosphopentomutase 2 (Streptococcus agalactiae serotype Ia (strain ATCC 27591 / A909 / CDC SS700)).